The following is a 536-amino-acid chain: Enterobactin synthase component E (536 aa).

7 residues coordinate substrate: Asn-235, Ser-240, Gly-309, Val-331, Ala-335, Asp-415, and Lys-432. Residues 438–439 (GG) form a phosphopantetheine binding region. Lys-441 provides a ligand contact to substrate.

This sequence belongs to the ATP-dependent AMP-binding enzyme family. EntE subfamily. Proteins EntB, EntD, EntE, and EntF form a multienzyme complex called enterobactin synthase. Monomer. EntA and EntE interact together.

The protein resides in the membrane. The enzyme catalyses 3 2,3-dihydroxybenzoate + 3 L-serine + 6 ATP = enterobactin + 6 AMP + 6 diphosphate + 4 H(+). The catalysed reaction is 2,3-dihydroxybenzoate + holo-[ACP] + ATP = 2,3-dihydroxybenzoyl-[ACP] + AMP + diphosphate. It catalyses the reaction 2,3-dihydroxybenzoyl-5'-AMP + holo-[ACP] = 2,3-dihydroxybenzoyl-[ACP] + AMP + H(+). The protein operates within siderophore biosynthesis; enterobactin biosynthesis. Its activity is regulated as follows. Inhibited by the adenylate analogs, 5'-O-[N-(salicyl)sulfamoyl]adenosine (Sal-AMS) and 5'-O-[N-(2,3-dihydroxybenzoyl)sulfamoyl]adenosine (DHB-AMS). Adenylation of 2,3-dihydroxybenzoate (DHB) is enhanced by a protein-protein interaction between the EntA and EntE. In terms of biological role, involved in the biosynthesis of the siderophore enterobactin (enterochelin), which is a macrocyclic trimeric lactone of N-(2,3-dihydroxybenzoyl)-serine. The serine trilactone serves as a scaffolding for the three catechol functionalities that provide hexadentate coordination for the tightly ligated iron(2+) atoms. EntE processes via a two-step adenylation-ligation reaction (bi-uni-uni-bi ping-pong mechanism). First, it catalyzes the activation of the carboxylate group of 2,3-dihydroxy-benzoate (DHB), via a reversible ATP-dependent pyrophosphate exchange reactions to yield the acyladenylate intermediate 2,3-dihydroxybenzoyl-AMP. It can also transfer AMP to salicylate, 2,4-dihydroxybenzoate, gentisate and 2,3,4-trihydroxybenzoate. In the second step, DHB is transferred from 2,3-dihydroxybenzoyl-AMP onto the phosphopantetheinylated EntB (holo-EntB) to form DHB-holo-EntB. Then this product will serve in the formation of the amide bond between 2,3-dihydroxybenzoate (DHB) and L-serine. It can also transfer adenylated salicylate to holo-EntB. The protein is Enterobactin synthase component E of Escherichia coli (strain K12).